We begin with the raw amino-acid sequence, 1423 residues long: MKDLVKFLKAQSKSNDDFDVIKIGLASPDKIRSWSFGEVKKPETINYRTFKPERDGLFCARIFGPVKDYECLCGKYKRLKHRGVICEKCGVEVTQTKVRRDRMGHIELACPVAHIWFLKSLPSRIGLILDMPLRDIERVLYFESYVVTEPGMTDLEKNQLLTEEQFLDAEERWGDEFEAKMGAEGIQALLRDMDLEHQCEMMREELQETNSETKRKKITKRLKLLEAFQQSGNKPEWMVMTVLPVLPPDLRPLVPLDGGRFATSDLNDLYRRVINRNNRLKRLLDLVAPDIIVRNEKRMLQESVDALLDNGRRGRAITGSNKRPLKSLADMIKGKQGRFRQNLLGKRVDYSGRSVITVGPYLHLHQCGLPKKMALELFRPFIYSKLESRGIASTIKAAKKMVEREEPIVWDILAEVIREHPILLNRAPTLHRLGIQAFEPILIEGKAIQLHPLVCAAFNADFDGDQMAVHVPLTLEAQLEARALMMSTNNVLSPASGDPIIVPSQDVVLGLYYMTREKVNAKGEGMYFLDPREAEKAYRTGQAELHARVKVRITEHVKNEAGELVAETKLLDTTIGRAILWMIAPKGMPFKVFNQTLGKKAISKLINESYRRLGLKESVILADQIMYTGFAYAARSGASVGIDDMVIPAQKHEIIRAAEAEVAEIQEQFNSGLVTAGERYNKVIDIWAAANERVAKAMMENLSTEEVINREGNPEKQASFNSIFMMADSGARGSAAQIRQLAGMRGLMARPDGSIIETPITANFREGLNVLQYFISTHGARKGLADTALKTANSGYLTRRLVDVAQDLVITEDDCGTHEGIVMTPLIEGGDVKEALRDRVLGRVVAEDVLKPGTEEVLIPRNTLIDEKWCDVIDAESVDVIKVRSVVTCNTDFGVCAKCYGRDLARGHLINQGEAVGVIAAQSIGEPGTQLTMRTFHIGGAASAAAKESSIQVKNAGTIKLTNAKFVTNKEGKIVLTSRNTELTVIDTFGRTKENYKVPYGAVLSKNDGAEVAVGEVVANWDPHTMPVISEVSGRIQFSDIVDGLTVTRQTDELTGLSSIVVQDVGERATAGKDLRPALRLVDAQGNDILIPSTDVAAQYFLPGKAIVTLDDGAEIEVGEALARIPQESVGTKDITGGLPRVADLFEARKPKEPAILAEISGIVSFGKETKGKRRLVITPAEGEAFEEMIPKWRQLNVFEGEMVQRGDVISDGAETPHDILRLRGVHAVTDYIVNEVQEVYRLQGVKINDKHIEVIVRQMLRKAVITNAYDSEFLEGEQVEVSRVKIANRKRAEEGKPLVEFERELLGITKASLATESFISAASFQETTRVLTEAAVAGKRDELRGLKENVIVGRLIPAGTGFAYHQNRAKKRNQPEQAGAFEAPVAKANGFATDADIEAEFEFVADDATQSLAALLNAGDEE.

Residues cysteine 71, cysteine 73, cysteine 86, and cysteine 89 each coordinate Zn(2+). Mg(2+)-binding residues include aspartate 461, aspartate 463, and aspartate 465. Cysteine 815, cysteine 889, cysteine 896, and cysteine 899 together coordinate Zn(2+).

This sequence belongs to the RNA polymerase beta' chain family. As to quaternary structure, the RNAP catalytic core consists of 2 alpha, 1 beta, 1 beta' and 1 omega subunit. When a sigma factor is associated with the core the holoenzyme is formed, which can initiate transcription. Requires Mg(2+) as cofactor. The cofactor is Zn(2+).

It carries out the reaction RNA(n) + a ribonucleoside 5'-triphosphate = RNA(n+1) + diphosphate. Functionally, DNA-dependent RNA polymerase catalyzes the transcription of DNA into RNA using the four ribonucleoside triphosphates as substrates. The protein is DNA-directed RNA polymerase subunit beta' of Actinobacillus pleuropneumoniae serotype 7 (strain AP76).